The sequence spans 365 residues: Centrosomal protein of 41 kDa B (365 aa).

Over residues 1–14 the composition is skewed to basic and acidic residues; sequence MSAKRSIGDPEILK. Disordered stretches follow at residues 1–23 and 104–123; these read MSAK…NQKY and EFLT…SKSP. A Rhodanese domain is found at 177-274; the sequence is EDCPFLLLDV…ISQKFPQGLT (98 aa). Residues 329–365 form a disordered region; that stretch reads TSTPSRLRLDSRNSKVPSSASSARSLSSTSSHSKPWK. Over residues 342-365 the composition is skewed to low complexity; that stretch reads SKVPSSASSARSLSSTSSHSKPWK.

This sequence belongs to the CEP41 family.

It localises to the cytoplasm. Its subcellular location is the cytoskeleton. It is found in the microtubule organizing center. The protein localises to the centrosome. The protein resides in the cell projection. It localises to the cilium. Its subcellular location is the cilium basal body. Functionally, required during ciliogenesis for tubulin glutamylation in cilium. Probably acts by participating in the transport of tubulin polyglutamylases between the basal body and the cilium. The protein is Centrosomal protein of 41 kDa B (cep41-b) of Xenopus laevis (African clawed frog).